Reading from the N-terminus, the 464-residue chain is Ribulose bisphosphate carboxylase/oxygenase activase A, chloroplastic (464 aa).

The transit peptide at 1–48 (MAAAFSSTVGAPASTPTNFLGKKLKKQVTSAVNYHGKSSKANRFTVMA) directs the protein to the chloroplast. Residue 155 to 162 (GGKGQGKS) coordinates ATP.

Belongs to the RuBisCO activase family.

It is found in the plastid. It localises to the chloroplast stroma. Functionally, activation of RuBisCO (ribulose-1,5-bisphosphate carboxylase/oxygenase; EC 4.1.1.39) involves the ATP-dependent carboxylation of the epsilon-amino group of lysine leading to a carbamate structure. The chain is Ribulose bisphosphate carboxylase/oxygenase activase A, chloroplastic (RCAA) from Hordeum vulgare (Barley).